Consider the following 653-residue polypeptide: Amyloid beta A4 precursor protein-binding family B member 1-interacting protein (653 aa).

Residues 82 to 141 form a disordered region; sequence NNKSTAPFPPADASNSYHFHPPPMPSIITEDLSLLPPPPEFDPHYPPPPPDPLTEPKTQE. The segment covering 116-134 has biased composition (pro residues); it reads LPPPPEFDPHYPPPPPDPL. Residues 165–253 enclose the Ras-associating domain; that stretch reads KKRIVKVHMI…IHFLEKNEKY (89 aa). The region spanning 295–404 is the PH domain; sequence VPELEAALYL…WVTGIRIAKY (110 aa). A compositionally biased stretch (basic and acidic residues) spans 462-481; sequence KHGEANKQEKKSSEVNKPET. Residues 462–653 form a disordered region; it reads KHGEANKQEK…ALQKKREPPT (192 aa). Residues 585–604 show a composition bias toward pro residues; sequence PAPPPPPPPPAPAANVPPLP. Residues 605-614 are compositionally biased toward basic residues; that stretch reads VKKHPPKPPK.

The protein belongs to the MRL family.

Its subcellular location is the cell membrane. It is found in the cytoplasm. The protein resides in the cytoskeleton. Functionally, appears to function in the signal transduction from Ras activation to actin cytoskeletal remodeling. The protein is Amyloid beta A4 precursor protein-binding family B member 1-interacting protein (apbb1ip) of Xenopus laevis (African clawed frog).